We begin with the raw amino-acid sequence, 303 residues long: MKSKKPRSLLGIEGMESKEINALLKLAARMEPTRRRNTLRGKTVVLLFYENSTRTRSSFELAAKVLGATTILITATASSIEKGESLIDTGYTVRALGADAIVMRHPSSGAHWLLAEHLDIPIINAGDGMHEHPSQGLLDALTILQAKKKFKGLKIAIVGDIYHSRVARSNVHLLPKLGAKVVLCGPPDLCPDEMAKIASGIEVSHNLDHALSGADVVMSLRVQKERLVGRQIGVEDYIANYQITPEKLALAKKDAVLMHPGPIIRGMELTSEVADGHASKILAQVHNGVKVRMAILQTLLAKN.

Arg54 and Thr55 together coordinate carbamoyl phosphate. Lys82 is an L-aspartate binding site. Positions 104, 132, and 135 each coordinate carbamoyl phosphate. Arg165 and Arg221 together coordinate L-aspartate. Positions 261 and 262 each coordinate carbamoyl phosphate.

It belongs to the aspartate/ornithine carbamoyltransferase superfamily. ATCase family. As to quaternary structure, heterododecamer (2C3:3R2) of six catalytic PyrB chains organized as two trimers (C3), and six regulatory PyrI chains organized as three dimers (R2).

The catalysed reaction is carbamoyl phosphate + L-aspartate = N-carbamoyl-L-aspartate + phosphate + H(+). Its pathway is pyrimidine metabolism; UMP biosynthesis via de novo pathway; (S)-dihydroorotate from bicarbonate: step 2/3. Functionally, catalyzes the condensation of carbamoyl phosphate and aspartate to form carbamoyl aspartate and inorganic phosphate, the committed step in the de novo pyrimidine nucleotide biosynthesis pathway. This is Aspartate carbamoyltransferase catalytic subunit from Koribacter versatilis (strain Ellin345).